We begin with the raw amino-acid sequence, 301 residues long: Glycine--tRNA ligase alpha subunit (301 aa).

The protein belongs to the class-II aminoacyl-tRNA synthetase family. In terms of assembly, tetramer of two alpha and two beta subunits.

The protein localises to the cytoplasm. The catalysed reaction is tRNA(Gly) + glycine + ATP = glycyl-tRNA(Gly) + AMP + diphosphate. The chain is Glycine--tRNA ligase alpha subunit from Shewanella piezotolerans (strain WP3 / JCM 13877).